We begin with the raw amino-acid sequence, 64 residues long: Protein sigN173 (64 aa).

This Dictyostelium discoideum (Social amoeba) protein is Protein sigN173.